The chain runs to 98 residues: Protein translation factor SUI1 homolog (98 aa).

Belongs to the SUI1 family.

The protein is Protein translation factor SUI1 homolog of Thermococcus kodakarensis (strain ATCC BAA-918 / JCM 12380 / KOD1) (Pyrococcus kodakaraensis (strain KOD1)).